A 388-amino-acid chain; its full sequence is Protein phosphatase 2C 57 (388 aa).

In terms of domain architecture, PPM-type phosphatase spans 59–348 (RWGYTSVQGF…DNISIIIADL (290 aa)). 4 residues coordinate Mn(2+): aspartate 93, glycine 94, aspartate 296, and aspartate 339. The helical transmembrane segment at 363 to 383 (VVVELVQAATTIGLVTVGIWM) threads the bilayer.

It belongs to the PP2C family. Requires Mg(2+) as cofactor. It depends on Mn(2+) as a cofactor.

Its subcellular location is the membrane. The protein localises to the plastid. It localises to the chloroplast stroma. The enzyme catalyses O-phospho-L-seryl-[protein] + H2O = L-seryl-[protein] + phosphate. It catalyses the reaction O-phospho-L-threonyl-[protein] + H2O = L-threonyl-[protein] + phosphate. Functionally, protein phosphatase specifically required for efficient dephosphorylation of the light-harvesting complex II outer antennae (LCHII) and transition from state 2 to state 1. State transition plays a central role in response to environmental changes and allows to adjust to changing light conditions via the redistribution of light excitation energy between photosystem II (PSII) and photosystem I (PSI) in a short time by relocating LHCII proteins. Mainly responsible for the dephosphorylation of Lhcb1 and Lhcb2 but not of the photosystem II core proteins. The sequence is that of Protein phosphatase 2C 57 from Arabidopsis thaliana (Mouse-ear cress).